The following is a 682-amino-acid chain: MSRKQLALFEPTLVVQALKEAVKKLNPQAQWRNPVMFIVWIGSLLTTFISIAMASGAMPGNALFSAAISAWLWVTVLFANFAEALAEGRSKAQANSLKGVKKTAFARKLREPKYGAAADKVPADQLRKGDIVLVEAGDIIPCDGEVIEGGASVDESAITGESAPVIRESGGDFASVTGGTRILSDWLVIECSVNPGETFLDRMIAMVEGAQRRKTPNEIALTILLIALTIVFLLATATLWPFSAWGGNAVSVTVLVALLVCLIPTTIGGLLSAIGVAGMSRMLGANVIATSGRAVEAAGDVDVLLLDKTGTITLGNRQASEFIPAQGVDEKTLADAAQLASLADETPEGRSIVILAKQRFNLRERDVQSLHATFVPFTAQSRMSGINIDNRMIRKGSVDAIRRHVEANGGHFPADVDQKVDQVARQGATPLVVVEGSRVLGVIALKDIVKGGIKERFAQLRKMGIKTVMITGDNRLTAAAIAAEAGVDDFLAEATPEAKLALIRQYQAEGRLVAMTGDGTNDAPALAQADVAVAMNSGTQAAKEAGNMVDLDSNPTKLIEVVHIGKQMLMTRGSLTTFSIANDVAKYFAIIPAAFAATYPQLNALNIMRLHSPDSAILSAVIFNALIIVFLIPLALKGASYKPLTASAMLRRNLWIYGLGGLLVPFIGIKVIDLLLTVCGLV.

Helical transmembrane passes span 34–54 (PVMFIVWIGSLLTTFISIAMA), 62–82 (ALFSAAISAWLWVTVLFANFA), 219–239 (IALTILLIALTIVFLLATATL), and 254–274 (VLVALLVCLIPTTIGGLLSAI). The 4-aspartylphosphate intermediate role is filled by aspartate 307. ATP contacts are provided by residues aspartate 344, glutamate 348, 377–384 (FTAQSRMS), and lysine 395. Residues aspartate 518 and aspartate 522 each contribute to the Mg(2+) site. Helical transmembrane passes span 588–608 (FAIIPAAFAATYPQLNALNIM), 616–636 (AILSAVIFNALIIVFLIPLAL), and 656–676 (IYGLGGLLVPFIGIKVIDLLL).

This sequence belongs to the cation transport ATPase (P-type) (TC 3.A.3) family. Type IA subfamily. The system is composed of three essential subunits: KdpA, KdpB and KdpC.

It is found in the cell inner membrane. It carries out the reaction K(+)(out) + ATP + H2O = K(+)(in) + ADP + phosphate + H(+). In terms of biological role, part of the high-affinity ATP-driven potassium transport (or Kdp) system, which catalyzes the hydrolysis of ATP coupled with the electrogenic transport of potassium into the cytoplasm. This subunit is responsible for energy coupling to the transport system and for the release of the potassium ions to the cytoplasm. This is Potassium-transporting ATPase ATP-binding subunit from Escherichia coli (strain SMS-3-5 / SECEC).